A 101-amino-acid chain; its full sequence is Small ribosomal subunit protein uS14 (101 aa).

This sequence belongs to the universal ribosomal protein uS14 family. As to quaternary structure, part of the 30S ribosomal subunit. Contacts proteins S3 and S10.

Functionally, binds 16S rRNA, required for the assembly of 30S particles and may also be responsible for determining the conformation of the 16S rRNA at the A site. The chain is Small ribosomal subunit protein uS14 from Shewanella oneidensis (strain ATCC 700550 / JCM 31522 / CIP 106686 / LMG 19005 / NCIMB 14063 / MR-1).